Consider the following 418-residue polypeptide: Gamma-glutamyl phosphate reductase (418 aa).

Belongs to the gamma-glutamyl phosphate reductase family.

The protein resides in the cytoplasm. It carries out the reaction L-glutamate 5-semialdehyde + phosphate + NADP(+) = L-glutamyl 5-phosphate + NADPH + H(+). It functions in the pathway amino-acid biosynthesis; L-proline biosynthesis; L-glutamate 5-semialdehyde from L-glutamate: step 2/2. Functionally, catalyzes the NADPH-dependent reduction of L-glutamate 5-phosphate into L-glutamate 5-semialdehyde and phosphate. The product spontaneously undergoes cyclization to form 1-pyrroline-5-carboxylate. The sequence is that of Gamma-glutamyl phosphate reductase from Histophilus somni (strain 129Pt) (Haemophilus somnus).